Reading from the N-terminus, the 269-residue chain is UPF0524 protein C3orf70 homolog A (269 aa).

Disordered stretches follow at residues V139 to I203 and D215 to C249. The segment covering R141–T150 has biased composition (pro residues). The segment covering H151–R164 has biased composition (low complexity). A compositionally biased stretch (basic and acidic residues) spans Q179–H191. Residues D215 to S233 show a composition bias toward acidic residues.

This sequence belongs to the UPF0524 family.

Its function is as follows. Plays a role in neuronal and neurobehavioral development. Required for normal expression of neuronal markers elavl3 and eno2 and neurobehaviors related to circadian rhythm and changes in light-dark conditions. The polypeptide is UPF0524 protein C3orf70 homolog A (Danio rerio (Zebrafish)).